We begin with the raw amino-acid sequence, 325 residues long: Beta-ketoacyl-[acyl-carrier-protein] synthase III (325 aa).

Active-site residues include Cys-116 and His-252. Residues 253–257 (QANLR) are ACP-binding. Asn-282 is a catalytic residue.

This sequence belongs to the thiolase-like superfamily. FabH family. In terms of assembly, homodimer.

The protein localises to the cytoplasm. It catalyses the reaction malonyl-[ACP] + acetyl-CoA + H(+) = 3-oxobutanoyl-[ACP] + CO2 + CoA. Its pathway is lipid metabolism; fatty acid biosynthesis. In terms of biological role, catalyzes the condensation reaction of fatty acid synthesis by the addition to an acyl acceptor of two carbons from malonyl-ACP. Catalyzes the first condensation reaction which initiates fatty acid synthesis and may therefore play a role in governing the total rate of fatty acid production. Possesses both acetoacetyl-ACP synthase and acetyl transacylase activities. Its substrate specificity determines the biosynthesis of branched-chain and/or straight-chain of fatty acids. In Xanthomonas axonopodis pv. citri (strain 306), this protein is Beta-ketoacyl-[acyl-carrier-protein] synthase III.